A 157-amino-acid polypeptide reads, in one-letter code: Nascent polypeptide-associated complex subunit beta (157 aa).

The disordered stretch occupies residues 1-28; sequence MPVDPEKLAKLQKSSAKKVGGSRVKAKK. The 66-residue stretch at 33–98 folds into the NAC-A/B domain; the sequence is EQDDTKLIEA…PQEKNITQLI (66 aa). The segment at 124–157 is disordered; sequence KTPKDFNTGSANAAADAGGEDIPDLVDQKFDDVE.

The protein belongs to the NAC-beta family. In terms of assembly, part of the nascent polypeptide-associated complex (NAC), consisting of EGD2 and EGD1. NAC associates with ribosomes via EGD1.

The protein resides in the cytoplasm. It localises to the nucleus. Functionally, component of the nascent polypeptide-associated complex (NAC), a dynamic component of the ribosomal exit tunnel, protecting the emerging polypeptides from interaction with other cytoplasmic proteins to ensure appropriate nascent protein targeting. The NAC complex also promotes mitochondrial protein import by enhancing productive ribosome interactions with the outer mitochondrial membrane and blocks the inappropriate interaction of ribosomes translating non-secretory nascent polypeptides with translocation sites in the membrane of the endoplasmic reticulum. EGD1 may act as a transcription factor that exert a negative effect on the expression of several genes that are transcribed by RNA polymerase II. The protein is Nascent polypeptide-associated complex subunit beta (EGD1) of Candida albicans (strain SC5314 / ATCC MYA-2876) (Yeast).